The sequence spans 393 residues: NAD(P)H-quinone oxidoreductase subunit H, chloroplastic (393 aa).

This sequence belongs to the complex I 49 kDa subunit family. NDH is composed of at least 16 different subunits, 5 of which are encoded in the nucleus.

It is found in the plastid. The protein localises to the chloroplast thylakoid membrane. The enzyme catalyses a plastoquinone + NADH + (n+1) H(+)(in) = a plastoquinol + NAD(+) + n H(+)(out). It carries out the reaction a plastoquinone + NADPH + (n+1) H(+)(in) = a plastoquinol + NADP(+) + n H(+)(out). In terms of biological role, NDH shuttles electrons from NAD(P)H:plastoquinone, via FMN and iron-sulfur (Fe-S) centers, to quinones in the photosynthetic chain and possibly in a chloroplast respiratory chain. The immediate electron acceptor for the enzyme in this species is believed to be plastoquinone. Couples the redox reaction to proton translocation, and thus conserves the redox energy in a proton gradient. This chain is NAD(P)H-quinone oxidoreductase subunit H, chloroplastic, found in Huperzia lucidula (Shining clubmoss).